A 320-amino-acid polypeptide reads, in one-letter code: tRNA U34 carboxymethyltransferase (320 aa).

Residues K89, W103, K108, G128, 150-152, 179-180, M194, Y198, and R313 each bind carboxy-S-adenosyl-L-methionine; these read DPT and IE.

The protein belongs to the class I-like SAM-binding methyltransferase superfamily. CmoB family. Homotetramer.

The enzyme catalyses carboxy-S-adenosyl-L-methionine + 5-hydroxyuridine(34) in tRNA = 5-carboxymethoxyuridine(34) in tRNA + S-adenosyl-L-homocysteine + H(+). Its function is as follows. Catalyzes carboxymethyl transfer from carboxy-S-adenosyl-L-methionine (Cx-SAM) to 5-hydroxyuridine (ho5U) to form 5-carboxymethoxyuridine (cmo5U) at position 34 in tRNAs. The polypeptide is tRNA U34 carboxymethyltransferase (Actinobacillus pleuropneumoniae serotype 7 (strain AP76)).